A 535-amino-acid polypeptide reads, in one-letter code: Cytochrome P450 monooxygenase claP (535 aa).

The next 2 membrane-spanning stretches (helical) occupy residues 7–27 (IGTL…KLVG) and 225–245 (YFSM…KLPT). Cysteine 472 contacts heme.

The protein belongs to the cytochrome P450 family. The cofactor is heme.

Its subcellular location is the membrane. It functions in the pathway secondary metabolite biosynthesis; terpenoid biosynthesis. In terms of biological role, cytochrome P450 monooxygenase; part of the gene cluster that mediates the biosynthesis of clavilactone A, a meroterpenoid that features a unique benzo-fused ten-membered carbocyclic ring unit with an alpha,beta-epoxy-gamma-lactone moiety, forming an intriguing 10/5/3 tricyclic nested skeleton. Cytochrome P450 monooxygenases claO, claP, claQ, claU, and claW are close orthologs, suggesting that a redundant function or pseudogenes are present in the cla cluster. These monoxygenases are not involved in clavilactone A biosynthesis nor its modification. ClaR, ClaS and ClaT are sufficient to produce clavilactone A. The biosynthesis begins with the prenyltransferase claS that transfers geranyl pyrophosphate (GPP) to hydroquinone to produces geranylhydroquinone. The cytochrome P450 monooxygenase claR then catalyzes the diradical coupling reaction between the intramolecular hydroquinone and allyl moieties to form the benzo-fused ten-membered carbocyclic ring unit of wigantol. Finally the cytochrome P450 monooxygenase claT exquisitely and stereoselectively assembles the alpha,beta-epoxy-gamma-lactone moiety, producing clavilactone A via arnebinol A. The protein is Cytochrome P450 monooxygenase claP of Ampulloclitocybe clavipes (Club foot).